The primary structure comprises 397 residues: 1-deoxy-D-xylulose 5-phosphate reductoisomerase (397 aa).

Residues Ser-10, Gly-11, Ser-12, Ile-13, Ala-36, Arg-37, and Asn-124 each contribute to the NADPH site. Position 125 (Lys-125) interacts with 1-deoxy-D-xylulose 5-phosphate. Residue Glu-126 participates in NADPH binding. Asp-150 is a Mn(2+) binding site. 1-deoxy-D-xylulose 5-phosphate-binding residues include Ser-151, Glu-152, Ser-186, and His-209. Glu-152 provides a ligand contact to Mn(2+). An NADPH-binding site is contributed by Gly-215. 1-deoxy-D-xylulose 5-phosphate-binding residues include Ser-222, Asn-227, Lys-228, and Glu-231. Glu-231 provides a ligand contact to Mn(2+).

This sequence belongs to the DXR family. Mg(2+) is required as a cofactor. It depends on Mn(2+) as a cofactor.

It catalyses the reaction 2-C-methyl-D-erythritol 4-phosphate + NADP(+) = 1-deoxy-D-xylulose 5-phosphate + NADPH + H(+). It participates in isoprenoid biosynthesis; isopentenyl diphosphate biosynthesis via DXP pathway; isopentenyl diphosphate from 1-deoxy-D-xylulose 5-phosphate: step 1/6. Its function is as follows. Catalyzes the NADPH-dependent rearrangement and reduction of 1-deoxy-D-xylulose-5-phosphate (DXP) to 2-C-methyl-D-erythritol 4-phosphate (MEP). The protein is 1-deoxy-D-xylulose 5-phosphate reductoisomerase of Aeromonas hydrophila subsp. hydrophila (strain ATCC 7966 / DSM 30187 / BCRC 13018 / CCUG 14551 / JCM 1027 / KCTC 2358 / NCIMB 9240 / NCTC 8049).